Here is an 83-residue protein sequence, read N- to C-terminus: Apolipoprotein C-I, acidic form (83 aa).

The first 26 residues, 1-26 (MRLFLSLPVLVVVLSMVLEGPAPAQG), serve as a signal peptide directing secretion.

The protein belongs to the apolipoprotein C1 family.

It is found in the secreted. In Gorilla gorilla gorilla (Western lowland gorilla), this protein is Apolipoprotein C-I, acidic form (APOC1A).